The following is a 143-amino-acid chain: Peptide methionine sulfoxide reductase MsrB (143 aa).

Residues 16 to 139 (DAELRRRLTP…NSAALNFESR (124 aa)) enclose the MsrB domain. Cys55, Cys58, Cys104, and Cys107 together coordinate Zn(2+). Cys128 acts as the Nucleophile in catalysis.

This sequence belongs to the MsrB Met sulfoxide reductase family. Requires Zn(2+) as cofactor.

The enzyme catalyses L-methionyl-[protein] + [thioredoxin]-disulfide + H2O = L-methionyl-(R)-S-oxide-[protein] + [thioredoxin]-dithiol. This is Peptide methionine sulfoxide reductase MsrB from Burkholderia vietnamiensis (strain G4 / LMG 22486) (Burkholderia cepacia (strain R1808)).